Reading from the N-terminus, the 506-residue chain is Nucleoside import ATP-binding protein NupA (506 aa).

ABC transporter domains follow at residues 7–242 (IQMI…VGRS) and 259–503 (LEIK…VGGN). 39–46 (GENGAGKS) contributes to the ATP binding site.

Belongs to the ABC transporter superfamily. In terms of assembly, the complex is composed of two ATP-binding proteins (NupA), two transmembrane proteins (NupB and NupC) and a solute-binding protein (BmpA).

The protein localises to the cell membrane. In terms of biological role, part of an ABC transporter complex involved in the uptake of all common nucleosides. Responsible for energy coupling to the transport system. The protein is Nucleoside import ATP-binding protein NupA of Lactococcus lactis subsp. cremoris (strain MG1363).